Reading from the N-terminus, the 863-residue chain is DNA mismatch repair protein MutS (863 aa).

615-622 (GPNMAGKS) is an ATP binding site.

The protein belongs to the DNA mismatch repair MutS family.

This protein is involved in the repair of mismatches in DNA. It is possible that it carries out the mismatch recognition step. This protein has a weak ATPase activity. This Pelotomaculum thermopropionicum (strain DSM 13744 / JCM 10971 / SI) protein is DNA mismatch repair protein MutS.